A 276-amino-acid chain; its full sequence is Large ribosomal subunit protein uL2 (276 aa).

Residues 212 to 276 (NRHRGIRPQT…KLIISRKKHK (65 aa)) form a disordered region. A compositionally biased stretch (basic residues) spans 257-276 (YKTRKKKASDKLIISRKKHK).

It belongs to the universal ribosomal protein uL2 family. As to quaternary structure, part of the 50S ribosomal subunit. Forms a bridge to the 30S subunit in the 70S ribosome.

One of the primary rRNA binding proteins. Required for association of the 30S and 50S subunits to form the 70S ribosome, for tRNA binding and peptide bond formation. It has been suggested to have peptidyltransferase activity; this is somewhat controversial. Makes several contacts with the 16S rRNA in the 70S ribosome. This chain is Large ribosomal subunit protein uL2, found in Helicobacter pylori (strain HPAG1).